We begin with the raw amino-acid sequence, 375 residues long: Sulfite efflux pump SSU1 (375 aa).

Over M1 to A25 the chain is Cytoplasmic. The chain crosses the membrane as a helical span at residues I26 to L46. The Extracellular segment spans residues L47–Y59. The helical transmembrane segment at I60–I80 threads the bilayer. Residues T81–M101 lie on the Cytoplasmic side of the membrane. The chain crosses the membrane as a helical span at residues L102–V122. Residues P123–G135 lie on the Extracellular side of the membrane. Residues L136 to M156 traverse the membrane as a helical segment. The Cytoplasmic segment spans residues T157–T167. A helical membrane pass occupies residues A168–A188. Over D189–T200 the chain is Extracellular. N-linked (GlcNAc...) asparagine glycosylation is present at N193. The helical transmembrane segment at I201–I221 threads the bilayer. Residues Y222–R234 are Cytoplasmic-facing. A helical transmembrane segment spans residues A235–M255. At Q256–D277 the chain is on the extracellular side. Residues I278–L298 traverse the membrane as a helical segment. The Cytoplasmic portion of the chain corresponds to W299–K309. Residues F310–T330 traverse the membrane as a helical segment. Over T331–D343 the chain is Extracellular. The chain crosses the membrane as a helical span at residues I344–T364. Residues V365–R375 are Cytoplasmic-facing.

This sequence belongs to the tellurite-resistance/dicarboxylate transporter (TDT) family.

The protein resides in the cell membrane. In terms of biological role, sulphite efflux pump required for the secretion of sulphite as a reducing agent. In the presence of sulphite, cystine in keratin is directly cleaved to cysteine and S-sulphocysteine, and thereby, reduced proteins become accessible to hydrolysis by a variety of secreted endo- and exoproteases. Excretion of sulphite mediated by an efflux pump also represents a detoxification pathway for dermatophytes during infection of the epidermal stratum corneum, hair and nails, which are rich in cysteine. This chain is Sulfite efflux pump SSU1, found in Arthroderma benhamiae (strain ATCC MYA-4681 / CBS 112371) (Trichophyton mentagrophytes).